The primary structure comprises 94 residues: Host-modulation protein 11K (94 aa).

As to quaternary structure, interacts with host GRB2; this interaction alters host cell environment by modulating host signaling pathways.

The protein localises to the host cytoplasm. Functionally, enhances viral DNA replication and virion release. Mechansitically, optimizes viral DNA replication by interacting with host GRB2 to inhibit the negative effect of ERK signaling on B19 viral replication. Plays a role in viral infectivity. Induces apoptosis of primary erythroid progenitor cells. This Human parvovirus B19 (strain HV) (HPV B19) protein is Host-modulation protein 11K (11K).